The sequence spans 102 residues: Iron-sulfur cluster assembly protein CyaY (102 aa).

It belongs to the frataxin family.

Its function is as follows. Involved in iron-sulfur (Fe-S) cluster assembly. May act as a regulator of Fe-S biogenesis. The chain is Iron-sulfur cluster assembly protein CyaY from Mannheimia succiniciproducens (strain KCTC 0769BP / MBEL55E).